Consider the following 238-residue polypeptide: Complement C1q-like protein 4 (238 aa).

The first 15 residues, 1–15 (MVLLLLVAIPLLVHS), serve as a signal peptide directing secretion. Positions 37 to 102 (SRGQGPDGAP…PGPGPGGAAP (66 aa)) are disordered. The Collagen-like domain maps to 53 to 96 (PPGAKGEVGRRGKAGLRGPPGPPGPRGPPGEPGRPGPPGPPGPG). Over residues 71–96 (PPGPPGPRGPPGEPGRPGPPGPPGPG) the composition is skewed to pro residues. A C1q domain is found at 105 to 238 (GYVPRIAFYA…TFSGFIIYPD (134 aa)).

As to quaternary structure, forms homooligomers, predominantly dimers or trimers. Forms heterooligomers with C1QL1, C1QL2 and C1QL3, when proteins are coexpressed; this interaction does not occur after secretion. Interacts with ADGRB3. As to expression, highly expressed in testis and adipose tissue, brown adipose tissue expressing higher levels than subcutaneous and visceral white adipose tissue. In gonadal fat pad, expressed at lower levels in adipocytes than in the stromal vascular fraction (VSP), which contains preadipocytes, fibroblasts, endothelial cells and occasional immune cells. Expression exhibits sexually dimorphism, with higher levels in females than in males.

It localises to the secreted. In terms of biological role, may regulate the number of excitatory synapses that are formed on hippocampus neurons. Has no effect on inhibitory synapses. May inhibit adipocyte differentiation at an early stage of the process. This is Complement C1q-like protein 4 (C1ql4) from Mus musculus (Mouse).